We begin with the raw amino-acid sequence, 899 residues long: Androgen receptor (899 aa).

Residues 1-537 (MEVQLGLGRV…PIDYYFPPQK (537 aa)) are modulating. The tract at residues 1 to 566 (MEVQLGLGRV…GSCKVFFKRA (566 aa)) is interaction with ZNF318. Disordered regions lie at residues 35–146 (QNPG…LSLL) and 175–222 (QQQQ…LGGN). Serine 61 carries the phosphoserine; by CDK9 modification. Serine 75 carries the post-translational modification Phosphoserine. Composition is skewed to low complexity over residues 94–103 (QPSQQQAASE) and 175–193 (QQQQ…QQQQ). Residues 210 to 222 (APSSSKDSYLGGN) are compositionally biased toward polar residues. A Phosphotyrosine; by CSK modification is found at tyrosine 218. Serine 251 carries the phosphoserine modification. Tyrosine 262 is subject to Phosphotyrosine; by CSK and TNK2. Phosphotyrosine; by CSK occurs at positions 302, 341, 352, and 357. Tyrosine 358 bears the Phosphotyrosine; by CSK and TNK2 mark. Lysine 381 is covalently cross-linked (Glycyl lysine isopeptide (Lys-Gly) (interchain with G-Cter in SUMO)). Phosphotyrosine; by CSK is present on tyrosine 388. The segment at 436-471 (EGQLYGPGGGGGSSSPSDAGPVAPYGYTRPPQGLTS) is disordered. Residue lysine 500 forms a Glycyl lysine isopeptide (Lys-Gly) (interchain with G-Cter in SUMO) linkage. Phosphotyrosine; by CSK is present on residues tyrosine 514 and tyrosine 531. The interval 531 to 898 (YYFPPQKTCL…GKVKPIYFHT (368 aa)) is interaction with LPXN. A DNA-binding region (nuclear receptor) is located at residues 538-611 (TCLICGDEAS…AGMTLGARKL (74 aa)). 2 NR C4-type zinc fingers span residues 539–559 (CLIC…CGSC) and 575–599 (CASR…LRKC). An interaction with HIPK3 region spans residues 551–641 (YGALTCGSCK…TEDPSQKMTV (91 aa)). The interval 571–898 (QKYLCASRND…GKVKPIYFHT (328 aa)) is interaction with CCAR1. The tract at residues 604–898 (MTLGARKLKK…GKVKPIYFHT (295 aa)) is interaction with KAT7. A Phosphoserine modification is found at serine 630. The NR LBD domain occupies 648–879 (ECQPIFLNVL…DFPEMMAEII (232 aa)). Residues asparagine 685 and arginine 732 each coordinate 17beta-hydroxy-5alpha-androstan-3-one. Residues lysine 825 and lysine 827 each participate in a glycyl lysine isopeptide (Lys-Gly) (interchain with G-Cter in ubiquitin) cross-link. Threonine 857 serves as a coordination point for 17beta-hydroxy-5alpha-androstan-3-one. Tyrosine 895 is subject to Phosphotyrosine; by CSK.

This sequence belongs to the nuclear hormone receptor family. NR3 subfamily. As to quaternary structure, binds DNA as a homodimer. Part of a ternary complex containing AR, EFCAB6/DJBP and PARK7. Interacts with HIPK3 and NR0B2 in the presence of androgen. The ligand binding domain interacts with KAT7/HBO1 in the presence of dihydrotestosterone. Interacts with EFCAB6/DJBP, PQBP1, RANBP9, SPDEF, SRA1, TGFB1I1, ZNF318 and RREB1. The AR N-terminal poly-Gln region binds Ran resulting in enhancement of AR-mediated transactivation. Ran-binding decreases as the poly-Gln length increases. Interacts with ZMIZ1/ZIMP10 and ZMIZ2/ZMIP7 which both enhance its transactivation activity. Interacts with RBAK. Interacts via the ligand-binding domain with LXXLL and FXXLF motifs from NCOA1, NCOA2, NCOA3 and MAGEA11. Interacts (via nuclear receptor DNA binding domain and nuclear receptor ligand binding domain) with NCOA4. Interacts with HIP1 (via coiled coil domain). Interacts with SLC30A9 and RAD54L2/ARIP4. Interacts with MACROD1 (via macro domain). Interacts (via ligand-binding domain) with TRIM68. Interacts with TNK2. Interacts with USP26. Interacts with RNF6. Interacts (regulated by RNF6 probably through polyubiquitination) with RNF14; regulates AR transcriptional activity. Interacts with PRMT2 and TRIM24. Interacts with RACK1. Interacts with RANBP10; this interaction enhances hormone-induced AR transcriptional activity. Interacts with PRPF6 in a hormone-independent way; this interaction enhances hormone-induced AR transcriptional activity. Interacts with STK4/MST1. Interacts with ZIPK/DAPK3. Interacts with LPXN. Interacts with MAK. Part of a complex containing AR, MAK and NCOA3. Interacts with CRY1. Interacts with CCAR1 and GATA2. Interacts with BUD31. Interacts with ARID4A. Interacts with ARID4B. Interacts (via NR LBD domain) with ZBTB7A; the interaction is direct and androgen-dependent. Interacts with NCOR1. Interacts with NCOR2. Interacts with CRY2 in a ligand-dependent manner. Phosphorylated in prostate cancer cells in response to several growth factors including EGF. Phosphorylation is induced by c-Src kinase (CSK). Tyr-514 is one of the major phosphorylation sites and an increase in phosphorylation and Src kinase activity is associated with prostate cancer progression. Phosphorylation by TNK2 enhances the DNA-binding and transcriptional activity. Phosphorylation at Ser-61 by CDK9 regulates AR promoter selectivity and cell growth. Phosphorylation by PAK6 leads to AR-mediated transcription inhibition. In terms of processing, sumoylated on Lys-381 (major) and Lys-500. Ubiquitinated. Deubiquitinated by USP26. 'Lys-6' and 'Lys-27'-linked polyubiquitination by RNF6 modulates AR transcriptional activity and specificity. Post-translationally, palmitoylated by ZDHHC7 and ZDHHC21. Palmitoylation is required for plasma membrane targeting and for rapid intracellular signaling via ERK and AKT kinases and cAMP generation.

The protein localises to the nucleus. It is found in the cytoplasm. Steroid hormone receptors are ligand-activated transcription factors that regulate eukaryotic gene expression and affect cellular proliferation and differentiation in target tissues. Transcription factor activity is modulated by bound coactivator and corepressor proteins like ZBTB7A that recruits NCOR1 and NCOR2 to the androgen response elements/ARE on target genes, negatively regulating androgen receptor signaling and androgen-induced cell proliferation. Transcription activation is also down-regulated by NR0B2. Activated, but not phosphorylated, by HIPK3 and ZIPK/DAPK3. This Mus musculus (Mouse) protein is Androgen receptor (Ar).